A 218-amino-acid polypeptide reads, in one-letter code: Octanoyltransferase (218 aa).

Residues 32–214 (VLTADEIWLV…HFTQLLGYND (183 aa)) enclose the BPL/LPL catalytic domain. Residues 71–78 (RGGQITYH), 143–145 (SLG), and 156–158 (GLA) each bind substrate. Residue Cys174 is the Acyl-thioester intermediate of the active site.

It belongs to the LipB family.

The protein localises to the cytoplasm. It carries out the reaction octanoyl-[ACP] + L-lysyl-[protein] = N(6)-octanoyl-L-lysyl-[protein] + holo-[ACP] + H(+). It participates in protein modification; protein lipoylation via endogenous pathway; protein N(6)-(lipoyl)lysine from octanoyl-[acyl-carrier-protein]: step 1/2. Its function is as follows. Catalyzes the transfer of endogenously produced octanoic acid from octanoyl-acyl-carrier-protein onto the lipoyl domains of lipoate-dependent enzymes. Lipoyl-ACP can also act as a substrate although octanoyl-ACP is likely to be the physiological substrate. The sequence is that of Octanoyltransferase from Histophilus somni (strain 2336) (Haemophilus somnus).